The following is an 807-amino-acid chain: DNA gyrase subunit B (807 aa).

The region spanning 429 to 543 (SELFIVEGDS…KGYLYIAQPP (115 aa)) is the Toprim domain. Mg(2+)-binding residues include E435, D508, and D510.

It belongs to the type II topoisomerase GyrB family. Heterotetramer, composed of two GyrA and two GyrB chains. In the heterotetramer, GyrA contains the active site tyrosine that forms a transient covalent intermediate with DNA, while GyrB binds cofactors and catalyzes ATP hydrolysis. Requires Mg(2+) as cofactor. The cofactor is Mn(2+). It depends on Ca(2+) as a cofactor.

Its subcellular location is the cytoplasm. The enzyme catalyses ATP-dependent breakage, passage and rejoining of double-stranded DNA.. Functionally, a type II topoisomerase that negatively supercoils closed circular double-stranded (ds) DNA in an ATP-dependent manner to modulate DNA topology and maintain chromosomes in an underwound state. Negative supercoiling favors strand separation, and DNA replication, transcription, recombination and repair, all of which involve strand separation. Also able to catalyze the interconversion of other topological isomers of dsDNA rings, including catenanes and knotted rings. Type II topoisomerases break and join 2 DNA strands simultaneously in an ATP-dependent manner. The chain is DNA gyrase subunit B from Rickettsia prowazekii (strain Madrid E).